The chain runs to 412 residues: MSIEIKNTGVKKVVLAYSGGLDTSAIIPWLKENYDNCEIIAFCADVGQGEEELVGLTEKALASGASECHIVDLKEEFVKEYIYPTIASGAIYEGTYLLGTSMARPIIAKAQVEVARKVGADALCHGCTGKGNDQVRFEGCFAALAPDLKVIAPWREWTMQSREDLLAYLAERDIKTSASATKIYSRDANAFHISHEGGELEDPWNEPSKGVWTLTAAPEDAPNKPEYVSLEVEHGRITKVNGEALTPYAALMTLNAIAAPHGVGRIDITENRLVGMKSRGCYETPGGTVMFAALRAIEELVLDKTSRNWREQVAAQMAHLVYDGRWFTPLCKSLLAASESLAESVNGEVVVKLYKGQATAVKKRSPNSLYSEAFATFGEDQVYDQKHAEGFIRLYSLASRIRALNANDVKSK.

ATP is bound by residues 16–24 (AYSGGLDTS) and Ala-44. Positions 96 and 101 each coordinate L-citrulline. Gly-126 serves as a coordination point for ATP. L-aspartate-binding residues include Thr-128, Asn-132, and Asp-133. Asn-132 serves as a coordination point for L-citrulline. L-citrulline is bound by residues Arg-136, Ser-185, Ser-194, Glu-270, and Tyr-282.

The protein belongs to the argininosuccinate synthase family. Type 1 subfamily. Homotetramer.

The protein resides in the cytoplasm. The enzyme catalyses L-citrulline + L-aspartate + ATP = 2-(N(omega)-L-arginino)succinate + AMP + diphosphate + H(+). It functions in the pathway amino-acid biosynthesis; L-arginine biosynthesis; L-arginine from L-ornithine and carbamoyl phosphate: step 2/3. This chain is Argininosuccinate synthase, found in Shewanella baltica (strain OS195).